The sequence spans 353 residues: MAQIHHCVTLLLILCCSGLCGAIQWLGLTVNGSRVAWNESGHCRLLDGLVPEQSQLCKRNLELMQSVVNAAKQAKLTCQMTFSDMRWNCSSVENAPNFTPDLSKGTRESAFVYALASATLSHTIARACASGELPTCSCGATPAEVPGTGFRWGGCGDNLHYGLNMGSAFVDAPMKSSKSGGTQATKMINLHNNAVGRQVLMDSLETKCKCHGVSGSCSVKTCWKGLQDLPHIANELKSKYLGATKVIHRQTGTRRQLVPRELDIRPVRESELVYLVSSPDYCAKNPKLGSYGTQDRVCNKTSVGSDSCNLMCCGRGYNAYTETIVERCQCKYYYCCYVVCKKCERTVERYVCK.

Residues 1 to 22 (MAQIHHCVTLLLILCCSGLCGA) form the signal peptide. N-linked (GlcNAc...) asparagine glycosylation is found at N31, N38, and N88. 5 disulfides stabilise this stretch: C78/C89, C128/C136, C138/C155, C208/C222, and C210/C217. S214 carries the O-palmitoleoyl serine; by PORCN lipid modification. A sulfotyrosine mark is found at Y274 and Y281. Cystine bridges form between C282/C313, C298/C308, C312/C352, C328/C343, C330/C340, and C335/C336. N-linked (GlcNAc...) asparagine glycosylation occurs at N299.

This sequence belongs to the Wnt family. In terms of assembly, homodimer. Secreted homodimers form a complex with wnt5a homodimers; tyrosine sulfation of both wnt11 and wnt5a by tpst1 is required for this interaction. Interacts with the transmembrane receptor fzd7/fz7. Interacts with lrp6 and ryk. Interacts with tdgf1/frl1. Interacts weakly with frzb1 and strongly with frzb2/crescent. Interaction with frzb2/crescent antagonizes wnt11 function in the neuroectoderm, but enhances it in mesodermal tissue. In terms of processing, glycosylation is required for protein secretion. Post-translationally, palmitoleoylation is required for efficient binding to frizzled receptors. Depalmitoleoylation leads to Wnt signaling pathway inhibition.

The protein localises to the secreted. It is found in the extracellular space. The protein resides in the extracellular matrix. Functionally, ligand for the frizzled7 transmembrane receptor. Primarily acts via non-canonical Wnt pathways mediated by either Ca(2+) and PKC, or by JNK and dvl2/dsh. Depending on the cellular context, can also signal via the canonical Wnt pathway mediated by beta-catenin and dvl2/dsh. May also inhibit canonical Wnt signaling. Maternally initiates dorsal/ventral axis formation by a canonical route, which signals via lrp6. In a complex with wnt5a, activates the canonical and non-canonical processes involved in axis formation. In the non-canonical pathway, acts through fzd7/fz7 to induce phosphorylation of dvl2/dsh. Signals through a non-canonical Wnt pathway to regulate convergent extension movements during gastrulation. Interactions with the secreted Wnt antagonist sfrp5 to coordinate foregut development, acting via a non-canonical wnt pathway whereby sfrp5 restricts wnt11b activity to prevent inappropriate foregut formation. Mediates cardiogenesis via non-canonical Wnt signaling involving JNK-activation and PKC. Acts redundantly with wnt11/wnt11r during pronephros induction. The protein is Protein Wnt-11b-1 of Xenopus tropicalis (Western clawed frog).